The sequence spans 443 residues: Methyl-coenzyme M reductase II subunit beta (443 aa).

Tyrosine 367 is a binding site for coenzyme M. Glycine 369 lines the coenzyme B pocket.

This sequence belongs to the methyl-coenzyme M reductase beta subunit family. As to quaternary structure, MCR is a hexamer of two alpha, two beta, and two gamma chains, forming a dimer of heterotrimers. Coenzyme F430 serves as cofactor.

It catalyses the reaction coenzyme B + methyl-coenzyme M = methane + coenzyme M-coenzyme B heterodisulfide. The protein operates within one-carbon metabolism; methyl-coenzyme M reduction; methane from methyl-coenzyme M: step 1/1. Component of the methyl-coenzyme M reductase (MCR) I that catalyzes the reductive cleavage of methyl-coenzyme M (CoM-S-CH3 or 2-(methylthio)ethanesulfonate) using coenzyme B (CoB or 7-mercaptoheptanoylthreonine phosphate) as reductant which results in the production of methane and the mixed heterodisulfide of CoB and CoM (CoM-S-S-CoB). This is the final step in methanogenesis. The sequence is that of Methyl-coenzyme M reductase II subunit beta (mrtB) from Methanothermus fervidus (strain ATCC 43054 / DSM 2088 / JCM 10308 / V24 S).